Here is a 265-residue protein sequence, read N- to C-terminus: Membrane steroid-binding protein 2 (265 aa).

Residues 63–85 (WAAARSASPVAVIAAVAGAAVVY) form a helical membrane-spanning segment. The tract at residues 94–116 (PPPPPARPREEPSEEAPPPPEPV) is disordered. The Cytochrome b5 heme-binding domain occupies 118-217 (VGEITAEELL…SKYVKVGTIK (100 aa)). Residues 120-217 (EITAEELLQY…SKYVKVGTIK (98 aa)) are steroid-binding.

Belongs to the cytochrome b5 family. MAPR subfamily.

The protein localises to the cell membrane. Functionally, binds multiple steroid compounds. This Oryza sativa subsp. japonica (Rice) protein is Membrane steroid-binding protein 2.